Consider the following 63-residue polypeptide: Large ribosomal subunit protein uL30 (63 aa).

Belongs to the universal ribosomal protein uL30 family. In terms of assembly, part of the 50S ribosomal subunit.

The sequence is that of Large ribosomal subunit protein uL30 from Rickettsia prowazekii (strain Madrid E).